We begin with the raw amino-acid sequence, 212 residues long: Regulatory protein RecX (212 aa).

The protein belongs to the RecX family.

The protein resides in the cytoplasm. In terms of biological role, modulates RecA activity. The sequence is that of Regulatory protein RecX from Clostridium botulinum (strain Eklund 17B / Type B).